Here is a 442-residue protein sequence, read N- to C-terminus: Casein kinase 1-like protein 10 (442 aa).

The Protein kinase domain occupies 9-278; that stretch reads FKLGRKIGSG…LKRLFRDLFI (270 aa). ATP-binding positions include 15-23 and lysine 38; that span reads IGSGSFGEL. Aspartate 128 (proton acceptor) is an active-site residue. Disordered stretches follow at residues 299 to 323 and 381 to 421; these read GSISKPRPNPKPALDPPGPSAERNE and AVMS…LSAR. Positions 305–317 are enriched in pro residues; the sequence is RPNPKPALDPPGP. Over residues 384 to 394 the composition is skewed to low complexity; that stretch reads SSSQPGSSGEL. Over residues 400-417 the composition is skewed to polar residues; it reads SKLFSSSAQKIQPVQETK.

The protein belongs to the protein kinase superfamily. CK1 Ser/Thr protein kinase family. Casein kinase I subfamily. In terms of assembly, monomer. Autophosphorylated.

The protein resides in the cytoplasm. It is found in the cell junction. Its subcellular location is the plasmodesma. The enzyme catalyses L-seryl-[protein] + ATP = O-phospho-L-seryl-[protein] + ADP + H(+). It carries out the reaction L-threonyl-[protein] + ATP = O-phospho-L-threonyl-[protein] + ADP + H(+). Functionally, casein kinases are operationally defined by their preferential utilization of acidic proteins such as caseins as substrates. It can phosphorylate a large number of proteins. The sequence is that of Casein kinase 1-like protein 10 from Arabidopsis thaliana (Mouse-ear cress).